Consider the following 172-residue polypeptide: Co-chaperone protein HscB homolog (172 aa).

A J domain is found at 2 to 69; it reads NHFELFNLPV…DSRAAYLLAL (68 aa).

It belongs to the HscB family. In terms of assembly, interacts with HscA and stimulates its ATPase activity.

In terms of biological role, co-chaperone involved in the maturation of iron-sulfur cluster-containing proteins. Seems to help targeting proteins to be folded toward HscA. The sequence is that of Co-chaperone protein HscB homolog from Acinetobacter baumannii (strain AB307-0294).